Reading from the N-terminus, the 153-residue chain is Protein Smg homolog (153 aa).

Belongs to the Smg family.

This chain is Protein Smg homolog, found in Neisseria gonorrhoeae (strain ATCC 700825 / FA 1090).